Consider the following 1615-residue polypeptide: DNA-directed RNA polymerase I subunit rpa1 (1615 aa).

Zn(2+) contacts are provided by Cys-65, Cys-68, Cys-75, and His-78. Positions 155–181 (GKSNEEGEEVMESDESDSDKMDTDENK) are disordered. A compositionally biased stretch (acidic residues) spans 160–171 (EGEEVMESDESD). Positions 172-181 (SDKMDTDENK) are enriched in basic and acidic residues. The Mg(2+) site is built by Asp-593, Asp-595, and Asp-597. Residues 955–967 (PQDYFFHCMAGRE) form a bridging helix region. Acidic residues predominate over residues 1305 to 1316 (DSLTINDDDAPA). The tract at residues 1305–1411 (DSLTINDDDA…NSRSSNSFSD (107 aa)) is disordered. Low complexity predominate over residues 1317-1336 (NDDTTNNDENTSQQQPSSQN). A compositionally biased stretch (acidic residues) spans 1366–1399 (EDGEEEAEEKDSDEGESEAEESDDKSDVDSDSDE). The span at 1400-1411 (ISNSRSSNSFSD) shows a compositional bias: low complexity.

This sequence belongs to the RNA polymerase beta' chain family. Component of the RNA polymerase I (Pol I) complex consisting of at least 13 subunits.

It is found in the nucleus. It catalyses the reaction RNA(n) + a ribonucleoside 5'-triphosphate = RNA(n+1) + diphosphate. Its function is as follows. DNA-dependent RNA polymerase catalyzes the transcription of DNA into RNA using the four ribonucleoside triphosphates as substrates. Largest and catalytic core component of RNA polymerase I which synthesizes ribosomal RNA precursors. Forms the polymerase active center together with the second largest subunit. A single stranded DNA template strand of the promoter is positioned within the central active site cleft of Pol I. A bridging helix emanates from RPA1 and crosses the cleft near the catalytic site and is thought to promote translocation of Pol I by acting as a ratchet that moves the RNA-DNA hybrid through the active site by switching from straight to bent conformations at each step of nucleotide addition. The chain is DNA-directed RNA polymerase I subunit rpa1 (polr1a) from Dictyostelium discoideum (Social amoeba).